The sequence spans 82 residues: MLNHRYHHYFHRHHHLNHHLYHRHHHHRHHHHRHHHRHQILHQNRHQIHQILLSLNNKIMGYAIFLFLSILLHLVYLVIHRL.

In Plasmodium falciparum (isolate fcm17 / Senegal), this protein is Histidine-rich protein.